The following is a 229-amino-acid chain: Potassium/proton antiporter CemA (229 aa).

A run of 3 helical transmembrane segments spans residues 7–27 (FTPLFYLASIVFLPWWISFSV), 107–127 (ILHFSTNIICFIILSGYSILG), and 189–209 (IISGLVSTFPVILDTIFKYWI).

The protein belongs to the CemA family.

Its subcellular location is the plastid. It is found in the chloroplast inner membrane. It catalyses the reaction K(+)(in) + H(+)(out) = K(+)(out) + H(+)(in). Contributes to K(+)/H(+) antiport activity by supporting proton efflux to control proton extrusion and homeostasis in chloroplasts in a light-dependent manner to modulate photosynthesis. Prevents excessive induction of non-photochemical quenching (NPQ) under continuous-light conditions. Indirectly promotes efficient inorganic carbon uptake into chloroplasts. In Atropa belladonna (Belladonna), this protein is Potassium/proton antiporter CemA.